A 350-amino-acid chain; its full sequence is UDP-3-O-acylglucosamine N-acyltransferase (350 aa).

His-251 (proton acceptor) is an active-site residue.

This sequence belongs to the transferase hexapeptide repeat family. LpxD subfamily. As to quaternary structure, homotrimer.

It catalyses the reaction a UDP-3-O-[(3R)-3-hydroxyacyl]-alpha-D-glucosamine + a (3R)-hydroxyacyl-[ACP] = a UDP-2-N,3-O-bis[(3R)-3-hydroxyacyl]-alpha-D-glucosamine + holo-[ACP] + H(+). It participates in bacterial outer membrane biogenesis; LPS lipid A biosynthesis. Its function is as follows. Catalyzes the N-acylation of UDP-3-O-acylglucosamine using 3-hydroxyacyl-ACP as the acyl donor. Is involved in the biosynthesis of lipid A, a phosphorylated glycolipid that anchors the lipopolysaccharide to the outer membrane of the cell. The chain is UDP-3-O-acylglucosamine N-acyltransferase from Prochlorococcus marinus (strain NATL2A).